The chain runs to 432 residues: Glutamyl-tRNA reductase (432 aa).

Residues 49 to 52 (TCNR), S109, 114 to 116 (EGQ), and Q120 contribute to the substrate site. The Nucleophile role is filled by C50. Residue 198–203 (GAGRMS) participates in NADP(+) binding.

The protein belongs to the glutamyl-tRNA reductase family. Homodimer.

It carries out the reaction (S)-4-amino-5-oxopentanoate + tRNA(Glu) + NADP(+) = L-glutamyl-tRNA(Glu) + NADPH + H(+). It participates in porphyrin-containing compound metabolism; protoporphyrin-IX biosynthesis; 5-aminolevulinate from L-glutamyl-tRNA(Glu): step 1/2. Its pathway is porphyrin-containing compound metabolism; chlorophyll biosynthesis. Its function is as follows. Catalyzes the NADPH-dependent reduction of glutamyl-tRNA(Glu) to glutamate 1-semialdehyde (GSA). This Synechococcus sp. (strain CC9605) protein is Glutamyl-tRNA reductase.